Consider the following 450-residue polypeptide: Signal recognition particle protein (450 aa).

Residues 106-113 (GLQGSGKT), 188-192 (DTAGR), and 246-249 (TKLD) each bind GTP.

The protein belongs to the GTP-binding SRP family. SRP54 subfamily. As to quaternary structure, part of the signal recognition particle protein translocation system, which is composed of SRP and FtsY.

It is found in the cytoplasm. It catalyses the reaction GTP + H2O = GDP + phosphate + H(+). Its function is as follows. Involved in targeting and insertion of nascent membrane proteins into the cytoplasmic membrane. Binds to the hydrophobic signal sequence of the ribosome-nascent chain (RNC) as it emerges from the ribosomes. The SRP-RNC complex is then targeted to the cytoplasmic membrane where it interacts with the SRP receptor FtsY. This Mycoplasma pneumoniae (strain ATCC 29342 / M129 / Subtype 1) (Mycoplasmoides pneumoniae) protein is Signal recognition particle protein.